The chain runs to 262 residues: Nodulation protein J (262 aa).

The 227-residue stretch at 33 to 259 (ASILGNLAEP…FLSVGLLQRR (227 aa)) folds into the ABC transmembrane type-2 domain. 6 helical membrane-spanning segments follow: residues 35–55 (ILGN…GLGA), 62–82 (GIPY…MISA), 125–145 (ALLA…ASWP), 147–167 (VLFA…LAMI), 177–197 (YFIF…GAVF), and 236–256 (LHIS…VGLL).

Belongs to the ABC-2 integral membrane protein family. Lipooligosaccharide exporter (TC 3.A.1.102) subfamily. The complex is composed of two ATP-binding proteins (NodI) and two transmembrane proteins (NodJ).

The protein localises to the cell inner membrane. Part of the ABC transporter complex NodIJ involved in the export of the nodulation factors (Nod factors), the bacterial signal molecules that induce symbiosis and subsequent nodulation induction. Nod factors are LCO (lipo-chitin oligosaccharide), a modified beta-1,4-linked N-acetylglucosamine oligosaccharide. This subunit encodes the transporter. The protein is Nodulation protein J (nodJ) of Sinorhizobium fredii (strain NBRC 101917 / NGR234).